The chain runs to 466 residues: Coproporphyrinogen III oxidase (466 aa).

Residues 9–14, 34–35, lysine 42, 56–59, valine 254, and 446–448 each bind FAD; these read GAGITG, EA, GPES, and VGL.

This sequence belongs to the protoporphyrinogen/coproporphyrinogen oxidase family. Coproporphyrinogen III oxidase subfamily. FAD is required as a cofactor.

It localises to the cytoplasm. It carries out the reaction coproporphyrinogen III + 3 O2 = coproporphyrin III + 3 H2O2. Its pathway is porphyrin-containing compound metabolism; protoheme biosynthesis. Its activity is regulated as follows. The generation of protoporphyrin IX, but not coproporphyrin III, is stimulated by heme-bound HemQ. This stimulatory effect is mediated by superoxide. Inhibited by acifluorfen analogs. Involved in coproporphyrin-dependent heme b biosynthesis. Catalyzes the oxidation of coproporphyrinogen III to coproporphyrin III. Can also oxidize protoporphyrinogen IX. The sequence is that of Coproporphyrinogen III oxidase from Staphylococcus aureus (strain NCTC 8325 / PS 47).